The sequence spans 115 residues: UPF0738 protein SERP0585 (115 aa).

This sequence belongs to the UPF0738 family.

The chain is UPF0738 protein SERP0585 from Staphylococcus epidermidis (strain ATCC 35984 / DSM 28319 / BCRC 17069 / CCUG 31568 / BM 3577 / RP62A).